Reading from the N-terminus, the 477-residue chain is Asparaginyl-tRNA synthetase (477 aa).

The transit peptide at 1-14 (MLGARRLLGALRLC) directs the protein to the mitochondrion. Lys353 is subject to N6-acetyllysine.

Belongs to the class-II aminoacyl-tRNA synthetase family. As to quaternary structure, homodimer. As to expression, expressed in brain and inner ear, including the cochlear epithelium and organ of Corti.

It is found in the mitochondrion matrix. The protein localises to the mitochondrion. It carries out the reaction tRNA(Asn) + L-asparagine + ATP = L-asparaginyl-tRNA(Asn) + AMP + diphosphate + H(+). Its function is as follows. Mitochondrial aminoacyl-tRNA synthetase that catalyzes the specific attachment of the asparagine amino acid (aa) to the homologous transfer RNA (tRNA), further participating in protein synthesis. The reaction occurs in a two steps: asparagine is first activated by ATP to form Asn-AMP and then transferred to the acceptor end of tRNA(Asn). The chain is Asparaginyl-tRNA synthetase from Mus musculus (Mouse).